The primary structure comprises 381 residues: Adaptive-response sensory kinase SasA (381 aa).

Residues 154-367 (MVAHELRTPL…CFYFTVPVWD (214 aa)) enclose the Histidine kinase domain. A Phosphohistidine; by autocatalysis modification is found at His-157.

Homooligomerizes. Interacts with KaiC. Participates in the KaiBC complex, whose core is composed of a KaiC homohexamer and 6 KaiB.

The catalysed reaction is ATP + protein L-histidine = ADP + protein N-phospho-L-histidine.. Its function is as follows. Member of the two-component regulatory system SasA/RpaA involved in genome-wide circadian gene expression. One of several clock output pathways. Participates in the Kai clock protein complex, the main circadian regulator in cyanobacteria, via its interaction with KaiC. KaiC enhances the autophosphorylation activity of SasA, which then transfers its phosphate group to RpaA to activate it. In addition to its output function, recruits fold-shifted KaiB (KaiB(fs)) to KaiC to cooperatively form the KaiB(6):KaiC(6) complex (independent of SasA kinase activity). Required for robustness of the circadian rhythm of gene expression and is involved in clock output, also required for adaptation to light/dark cycles. The sequence is that of Adaptive-response sensory kinase SasA from Prochlorococcus marinus (strain SARG / CCMP1375 / SS120).